Here is a 178-residue protein sequence, read N- to C-terminus: Enhancer of split m5 protein (178 aa).

Positions 18–73 (YLKVKKPLLERQRRARMNKCLDTLKTLVAEFQGDDAILRMDKAEMLEAALVFMRKQ) constitute a bHLH domain. The region spanning 89–122 (FKNGYMNAVSEISRVMACTPAMSVDVGKTVMTHL) is the Orange domain. Positions 135–165 (VQTSVTTSTPRPLSPASSGYHSDNEDSQSAA) are enriched in polar residues. A disordered region spans residues 135 to 178 (VQTSVTTSTPRPLSPASSGYHSDNEDSQSAASPKPVEETMWRPW). The span at 169-178 (PVEETMWRPW) shows a compositional bias: basic and acidic residues. A WRPW motif motif is present at residues 175-178 (WRPW).

As to quaternary structure, transcription repression requires formation of a complex with a corepressor protein (Groucho). Forms homodimers.

It localises to the nucleus. Its function is as follows. Participates in the control of cell fate choice by uncommitted neuroectodermal cells in the embryo. Transcriptional repressor. Binds DNA on N-box motifs: 5'-CACNAG-3'. In Drosophila melanogaster (Fruit fly), this protein is Enhancer of split m5 protein.